Consider the following 597-residue polypeptide: Fructan 1-exohydrolase w1 (597 aa).

The signal sequence occupies residues 1-20 (MAQAWAFLLPVLVFGSYVTS). Asp-76 is a catalytic residue. Residues Asn-169, Asn-237, and Asn-249 are each glycosylated (N-linked (GlcNAc...) asparagine). Cys-447 and Cys-493 are disulfide-bonded. N-linked (GlcNAc...) asparagine glycosylation occurs at Asn-568.

Belongs to the glycosyl hydrolase 32 family.

It carries out the reaction Hydrolysis of terminal, non-reducing (2-&gt;1)-linked beta-D-fructofuranose residues in fructans.. Inhibited by sucrose. Functionally, hydrolyzes inulin-type beta-(2,1)-fructans and beta-(2,1)-linkages in branched fructans. Has low activity against beta-(2,6)-linked fructans. May play a role as a beta-(2,1)-trimmer during graminan biosynthesis. The protein is Fructan 1-exohydrolase w1 of Triticum aestivum (Wheat).